Consider the following 256-residue polypeptide: Doublecortin domain-containing protein (256 aa).

Residues 71–103 (NVFERLTDTAYYTGSHRERFDEFGNGRGIAGRE) form a partial p25alpha domain region. The 75-residue stretch at 152–226 (RLMWLYRNGD…AKYLCTSGEP (75 aa)) folds into the Doublecortin domain.

The protein localises to the cytoplasm. Its subcellular location is the cytoskeleton. Its function is as follows. Specifically required in the formation and maintenance of the conoid fibers; the conoid is a component of the cytoskeletal apical complex, which is composed of a left-handed spiral of 14 fibers made from a nontubular tubulin polymer. Promotes the organization, curvature, and stability of the conoid fibers, and probably bridges other conoid components to the tubulin core. This Toxoplasma gondii (strain ATCC 50861 / VEG) protein is Doublecortin domain-containing protein.